A 478-amino-acid chain; its full sequence is Maintenance of telomere capping protein 1 (478 aa).

The segment at 1–153 is disordered; that stretch reads MSENKNSEAE…LHDPIASISN (153 aa). Basic and acidic residues-rich tracts occupy residues 77–87 and 95–124; these read TDKKGVEKKAP and AQDEKVEESKENKNSEQDAHGKEKEPQQQE. Over residues 125-141 the composition is skewed to acidic residues; sequence KEEEEEEEEEEEEEEEE. Serine 273 carries the phosphoserine modification. 2 stretches are compositionally biased toward basic and acidic residues: residues 321–336 and 421–435; these read QKQQKEADATPDDDRS and SEERNKSYDQKKQKE. 2 disordered regions span residues 321–341 and 416–448; these read QKQQKEADATPDDDRSSISSN and TGSTASEERNKSYDQKKQKESEDEDEDDEIIDP. Serine 436 carries the post-translational modification Phosphoserine. Over residues 436–447 the composition is skewed to acidic residues; sequence SEDEDEDDEIID.

Belongs to the MTC1 family. Interacts with ribosomes.

The protein resides in the cytoplasm. The protein localises to the cytoplasmic vesicle. It localises to the COPI-coated vesicle. In terms of biological role, involved in telomere capping. The polypeptide is Maintenance of telomere capping protein 1 (MTC1) (Saccharomyces cerevisiae (strain ATCC 204508 / S288c) (Baker's yeast)).